The chain runs to 353 residues: Carbamoyl phosphate synthase arginine-specific small chain (353 aa).

The segment at 1-162 (MEGYLVLEDG…EISTFGDGNK (162 aa)) is CPSase. Residues S44, G210, and G212 each contribute to the L-glutamine site. Residues 163–349 (HIALIDFGYK…LKNVIPARRE (187 aa)) form the Glutamine amidotransferase type-1 domain. C237 acts as the Nucleophile in catalysis. L-glutamine is bound by residues L238, Q241, N279, and Y282. Active-site residues include H322 and E324.

Belongs to the CarA family. Composed of two chains; the small (or glutamine) chain promotes the hydrolysis of glutamine to ammonia, which is used by the large (or ammonia) chain to synthesize carbamoyl phosphate. Tetramer of heterodimers (alpha,beta)4.

The catalysed reaction is hydrogencarbonate + L-glutamine + 2 ATP + H2O = carbamoyl phosphate + L-glutamate + 2 ADP + phosphate + 2 H(+). The enzyme catalyses L-glutamine + H2O = L-glutamate + NH4(+). Its pathway is amino-acid biosynthesis; L-arginine biosynthesis; carbamoyl phosphate from bicarbonate: step 1/1. In terms of biological role, small subunit of the glutamine-dependent carbamoyl phosphate synthetase (CPSase). CPSase catalyzes the formation of carbamoyl phosphate from the ammonia moiety of glutamine, carbonate, and phosphate donated by ATP, constituting the first step of the biosynthetic pathway leading to arginine and/or urea. The small subunit (glutamine amidotransferase) binds and cleaves glutamine to supply the large subunit with the substrate ammonia. This chain is Carbamoyl phosphate synthase arginine-specific small chain, found in Bacillus subtilis (strain 168).